A 313-amino-acid polypeptide reads, in one-letter code: 4-hydroxy-3-methylbut-2-enyl diphosphate reductase (313 aa).

[4Fe-4S] cluster is bound at residue Cys-12. His-41 and His-74 together coordinate (2E)-4-hydroxy-3-methylbut-2-enyl diphosphate. Dimethylallyl diphosphate is bound by residues His-41 and His-74. Positions 41 and 74 each coordinate isopentenyl diphosphate. Residue Cys-96 coordinates [4Fe-4S] cluster. (2E)-4-hydroxy-3-methylbut-2-enyl diphosphate is bound at residue His-124. Dimethylallyl diphosphate is bound at residue His-124. His-124 is an isopentenyl diphosphate binding site. Glu-126 functions as the Proton donor in the catalytic mechanism. Residue Thr-167 participates in (2E)-4-hydroxy-3-methylbut-2-enyl diphosphate binding. Cys-197 provides a ligand contact to [4Fe-4S] cluster. (2E)-4-hydroxy-3-methylbut-2-enyl diphosphate-binding residues include Ser-225, Ser-226, Asn-227, and Ser-269. 4 residues coordinate dimethylallyl diphosphate: Ser-225, Ser-226, Asn-227, and Ser-269. Ser-225, Ser-226, Asn-227, and Ser-269 together coordinate isopentenyl diphosphate.

It belongs to the IspH family. It depends on [4Fe-4S] cluster as a cofactor.

The enzyme catalyses isopentenyl diphosphate + 2 oxidized [2Fe-2S]-[ferredoxin] + H2O = (2E)-4-hydroxy-3-methylbut-2-enyl diphosphate + 2 reduced [2Fe-2S]-[ferredoxin] + 2 H(+). The catalysed reaction is dimethylallyl diphosphate + 2 oxidized [2Fe-2S]-[ferredoxin] + H2O = (2E)-4-hydroxy-3-methylbut-2-enyl diphosphate + 2 reduced [2Fe-2S]-[ferredoxin] + 2 H(+). It participates in isoprenoid biosynthesis; dimethylallyl diphosphate biosynthesis; dimethylallyl diphosphate from (2E)-4-hydroxy-3-methylbutenyl diphosphate: step 1/1. It functions in the pathway isoprenoid biosynthesis; isopentenyl diphosphate biosynthesis via DXP pathway; isopentenyl diphosphate from 1-deoxy-D-xylulose 5-phosphate: step 6/6. Its function is as follows. Catalyzes the conversion of 1-hydroxy-2-methyl-2-(E)-butenyl 4-diphosphate (HMBPP) into a mixture of isopentenyl diphosphate (IPP) and dimethylallyl diphosphate (DMAPP). Acts in the terminal step of the DOXP/MEP pathway for isoprenoid precursor biosynthesis. This Methylococcus capsulatus (strain ATCC 33009 / NCIMB 11132 / Bath) protein is 4-hydroxy-3-methylbut-2-enyl diphosphate reductase.